The sequence spans 299 residues: Trans-aconitate 3-methyltransferase (299 aa).

Serine 2 is subject to N-acetylserine.

The protein belongs to the methyltransferase superfamily. Tam family.

It localises to the cytoplasm. The enzyme catalyses trans-aconitate + S-adenosyl-L-methionine = (E)-2-(methoxycarbonylmethyl)but-2-enedioate + S-adenosyl-L-homocysteine. In terms of biological role, catalyzes the S-adenosylmethionine monomethyl esterification of trans-aconitate and 3-isopropylmalate at high affinity and of other molecules like cis-aconitate, isocitrate, and citrate at lower velocities and affinities. The function of trans-aconitate methylation appears to be in reducing the toxicity of this spontaneous breakdown product of cis-aconitate. The role of 3-isopropylmalate methylation is unclear but may represent a metabolic branch at 3-isopropylmalate, where some of the material is taken in the pathway leading to leucine and some is taken in a pathway to the 3-isopropylmalate methyl ester, a molecule that provides a signal to switch from vegetative to invasive growth in response to amino acid starvation. This is Trans-aconitate 3-methyltransferase (TMT1) from Saccharomyces cerevisiae (strain ATCC 204508 / S288c) (Baker's yeast).